A 245-amino-acid polypeptide reads, in one-letter code: Ribonuclease 3 (245 aa).

The RNase III domain maps to 19 to 148; it reads FKLFQEKIGI…FIGALYLDQG (130 aa). Residue glutamate 61 coordinates Mg(2+). Aspartate 65 is a catalytic residue. Aspartate 134 and glutamate 137 together coordinate Mg(2+). Glutamate 137 is an active-site residue. One can recognise a DRBM domain in the interval 174 to 243; it reads DYKSQLQELI…AAEALKKLKE (70 aa).

The protein belongs to the ribonuclease III family. As to quaternary structure, homodimer. Mg(2+) is required as a cofactor.

The protein localises to the cytoplasm. The enzyme catalyses Endonucleolytic cleavage to 5'-phosphomonoester.. In terms of biological role, digests double-stranded RNA. Involved in the processing of primary rRNA transcript to yield the immediate precursors to the large and small rRNAs (23S and 16S). Processes some mRNAs, and tRNAs when they are encoded in the rRNA operon. Processes pre-crRNA and tracrRNA of type II CRISPR loci if present in the organism. The chain is Ribonuclease 3 from Bacillus cereus (strain 03BB102).